Here is a 1294-residue protein sequence, read N- to C-terminus: CLIP-associating protein 2 (1294 aa).

A disordered region spans residues 1 to 61; the sequence is MAMGDDKSFD…KVGGASKEGG (61 aa). Ser8 and Ser14 each carry phosphoserine. Gly residues predominate over residues 47–61; sequence SAGGPKVGGASKEGG. Positions 60–311 are TOG 1; that stretch reads GGAGAVDEDD…KSLQTYLKSS (252 aa). HEAT repeat units follow at residues 173 to 208, 209 to 245, and 250 to 287; these read HGAEAIVPTLFNLVPNSAKVMATSGCAAIRFIIRHT, HVPRLIPLITSNCTSKSVPVRRRSFEFLDLLLQEWQT, and RHAAVLVETIKKGIHDADAEARVEARKTYMGLRNHFPG. The disordered stretch occupies residues 314–368; sequence VASLPQSDRSSSSSQESLNRPFSSKWSTANPSTVAGRVSAGSSKASSLPGSLQRS. Ser316, Ser327, and Ser330 each carry phosphoserine. Positions 316-334 are enriched in low complexity; sequence SLPQSDRSSSSSQESLNRP. 2 stretches are compositionally biased toward polar residues: residues 335–346 and 353–367; these read FSSKWSTANPST and AGSSKASSLPGSLQR. 4 positions are modified to phosphoserine: Ser360, Ser368, Ser370, and Ser407. The tract at residues 409–467 is disordered; it reads EDTSDKLDGTASEDGRVRAKLSAPLAGMGNAKADSRGRSRTKMVSQSQPGSRSGSPGRV. Over residues 411 to 425 the composition is skewed to basic and acidic residues; it reads TSDKLDGTASEDGRV. An interaction with microtubules, MAPRE1 and MAPRE3 region spans residues 444–580; sequence RGRSRTKMVS…GPGYGISQSS (137 aa). Residues 453-467 are compositionally biased toward low complexity; sequence SQSQPGSRSGSPGRV. A phosphoserine mark is found at Ser455, Ser459, Ser463, Ser478, and Ser489. A disordered region spans residues 488–557; it reads ASAQKRSKIP…PLASRHHSRS (70 aa). The SXIP motif 1; mediates interaction with MAPRE1 and targeting to microtubule plus ends motif lies at 494–497; that stretch reads SKIP. Ser507 is subject to Phosphoserine. The SXIP motif 2; mediates interaction with MAPRE1 and targeting to microtubule plus ends signature appears at 517–520; the sequence is SRIP. Residues Ser525, Ser529, Ser585, Ser587, Ser596, Ser621, and Ser627 each carry the phosphoserine modification. Residues 617-645 form a disordered region; the sequence is YGMHSDDDANSDASSACSERSYSSRNGSI. A compositionally biased stretch (low complexity) spans 627 to 641; the sequence is SDASSACSERSYSSR. Positions 649–881 are TOG 2; the sequence is MRQTEDVAEV…TKLLHNHLRN (233 aa). HEAT repeat units follow at residues 710 to 747 and 772 to 809; these read RVFSMFLETLVDFIQVHKDDLQDWLFVLLTQLLKKMGA and LQFNILMRFTVDQTQTPSLKVKVAILKYIETLAKQMDP. Thr787 carries the phosphothreonine modification. The interaction with RSN and localization to the Golgi and kinetochores stretch occupies residues 872–1294; that stretch reads TKLLHNHLRN…DPTTDVSGQS (423 aa). Disordered regions lie at residues 878–928 and 952–995; these read HLRN…FDYD and SFRS…DSSQ. Polar residues-rich tracts occupy residues 880–892 and 901–922; these read RNTGNGTQSSMGS and SPANWSSPLTSPTNTSQNTLSP. Ser892 is modified (phosphoserine). Phosphoserine is present on residues Ser952, Ser955, Ser1013, and Ser1029. Basic and acidic residues predominate over residues 955-972; the sequence is SQEDMNEPLKRDSKKDDG. The interval 1017-1294 is required for cortical localization; it reads RDYNPYNYSD…DPTTDVSGQS (278 aa). 3 HEAT repeats span residues 1054–1091, 1098–1135, and 1216–1253; these read LDHSDLVAELLKELSNHNERVEERKIALYELMKLTQEE, EHFKTILLLLLETLGDKEPTIRALALKVLREILRHQPA, and LLLPEIMPGLIQGYDNSESSVRKACVFCLVAVHAVIGD.

The protein belongs to the CLASP family. As to quaternary structure, interacts with microtubules. Interacts with MAPRE1; probably required for targeting to the growing microtubule plus ends. Interacts with CLIP2, ERC1, MAPRE3, PHLDB2 and RSN. The interaction with ERC1 may be mediated by PHLDB2. Interacts with GCC2; recruits CLASP2 to Golgi membranes. Interacts with MACF1. Interacts with mtcl2 and MTCL1. In terms of processing, phosphorylated by GSK3B. Phosphorylation reduces MAPRE1 binding. Phosphorylation by GSK3B may negatively regulate binding to microtubule lattices in lamella. As to expression, brain-specific.

It localises to the cytoplasm. The protein localises to the cytoskeleton. Its subcellular location is the microtubule organizing center. It is found in the centrosome. The protein resides in the chromosome. It localises to the centromere. The protein localises to the kinetochore. Its subcellular location is the spindle. It is found in the golgi apparatus. The protein resides in the trans-Golgi network. It localises to the cell membrane. The protein localises to the cell projection. Its subcellular location is the ruffle membrane. It is found in the cell cortex. In terms of biological role, microtubule plus-end tracking protein that promotes the stabilization of dynamic microtubules. Involved in the nucleation of noncentrosomal microtubules originating from the trans-Golgi network (TGN). Required for the polarization of the cytoplasmic microtubule arrays in migrating cells towards the leading edge of the cell. May act at the cell cortex to enhance the frequency of rescue of depolymerizing microtubules by attaching their plus-ends to cortical platforms composed of ERC1 and PHLDB2. This cortical microtubule stabilizing activity is regulated at least in part by phosphatidylinositol 3-kinase signaling. Also performs a similar stabilizing function at the kinetochore which is essential for the bipolar alignment of chromosomes on the mitotic spindle. Acts as a mediator of ERBB2-dependent stabilization of microtubules at the cell cortex. This is CLIP-associating protein 2 (CLASP2) from Homo sapiens (Human).